We begin with the raw amino-acid sequence, 469 residues long: uncharacterized protein (469 aa).

Basic and acidic residues predominate over residues 152–161; sequence VREGKEEKKG. Positions 152 to 174 are disordered; the sequence is VREGKEEKKGGPPGRGPPGWRRR. Coiled coils occupy residues 346 to 375 and 423 to 453; these read KAAL…RSES and SDIT…KIKG.

This is an uncharacterized protein from Homo sapiens (Human).